Reading from the N-terminus, the 273-residue chain is WIMGHMVNSIAQIDEFVNLGANSIETDVSFDKQANPEYTYHGIPCDCGRNCLKWEYFNDFVKGLRRATTPGDSKYREKLVLVVFDLKTGSLYDNQAYDAGTKLAKNLLQHYWNNGNNGGRAYIVLSIPNLNHYKLIAGFKDTLKNEGHEDLLGKVGHDFSGNDDIPDVEEAYKKAGVTGHVWQSDGITNCFPRTLKRVRLAIANRDSGNGIINKVYYWTVDKRSTTRDSLDAGVDGIMTNYPDVIADVLSESAYKNKYKIATYEDNPWETFKA.

His5 is an active-site residue. Mg(2+)-binding residues include Glu25 and Asp27. Residue His41 is the Nucleophile of the active site. 2 cysteine pairs are disulfide-bonded: Cys45–Cys51 and Cys47–Cys190. Asp85 is a Mg(2+) binding site.

This sequence belongs to the arthropod phospholipase D family. Class II subfamily. Mg(2+) serves as cofactor. Expressed by the venom gland.

It is found in the secreted. It catalyses the reaction an N-(acyl)-sphingosylphosphocholine = an N-(acyl)-sphingosyl-1,3-cyclic phosphate + choline. The enzyme catalyses an N-(acyl)-sphingosylphosphoethanolamine = an N-(acyl)-sphingosyl-1,3-cyclic phosphate + ethanolamine. The catalysed reaction is a 1-acyl-sn-glycero-3-phosphocholine = a 1-acyl-sn-glycero-2,3-cyclic phosphate + choline. It carries out the reaction a 1-acyl-sn-glycero-3-phosphoethanolamine = a 1-acyl-sn-glycero-2,3-cyclic phosphate + ethanolamine. In terms of biological role, dermonecrotic toxins cleave the phosphodiester linkage between the phosphate and headgroup of certain phospholipids (sphingolipid and lysolipid substrates), forming an alcohol (often choline) and a cyclic phosphate. This toxin acts on sphingomyelin (SM). It may also act on ceramide phosphoethanolamine (CPE), lysophosphatidylcholine (LPC) and lysophosphatidylethanolamine (LPE), but not on lysophosphatidylserine (LPS), and lysophosphatidylglycerol (LPG). It acts by transphosphatidylation, releasing exclusively cyclic phosphate products as second products. Induces dermonecrosis, hemolysis, increased vascular permeability, edema, inflammatory response, and platelet aggregation. This is Dermonecrotic toxin LruSicTox-alphaIC1d from Loxosceles rufescens (Mediterranean recluse spider).